Reading from the N-terminus, the 130-residue chain is MNFRRENRASRTSLFDGLDGLEEGRLRASSSYAHDERDNDEALENLQDRVSFLKRVTGDIHEEVENHNRLLDKVGNKMDSARGIMSGTINRFKLVFEKKSNRKSCKLIAYFVLLFLIMYYLIRLLNYIKG.

The Cytoplasmic portion of the chain corresponds to 1 to 106 (MNFRRENRAS…EKKSNRKSCK (106 aa)). One can recognise a t-SNARE coiled-coil homology domain in the interval 33 to 95 (AHDERDNDEA…SGTINRFKLV (63 aa)). A coiled-coil region spans residues 40-82 (DEALENLQDRVSFLKRVTGDIHEEVENHNRLLDKVGNKMDSAR). The helical; Anchor for type IV membrane protein transmembrane segment at 107-122 (LIAYFVLLFLIMYYLI) threads the bilayer. Residues 123–130 (RLLNYIKG) are Vesicular-facing.

This sequence belongs to the BET1 family.

It localises to the golgi apparatus membrane. The protein resides in the endoplasmic reticulum membrane. Functionally, required for vesicular transport from the ER to the Golgi complex. Functions as a SNARE associated with ER-derived vesicles. This Arabidopsis thaliana (Mouse-ear cress) protein is Bet1-like SNARE 1-2 (BET12).